Reading from the N-terminus, the 76-residue chain is KANTR integral membrane protein (76 aa).

Residues 1-25 (MSPFSLLILVICAFSLFFLINLSRG) form the signal peptide. At 26-34 (LSILLVFTK) the chain is on the extracellular side. A helical membrane pass occupies residues 35–55 (NQLLALLLLSIVSLFSISLIS). The Cytoplasmic segment spans residues 56–76 (ALIFFDLLPSTFFGFILLLFF).

Its subcellular location is the membrane. The protein is KANTR integral membrane protein of Mus musculus (Mouse).